We begin with the raw amino-acid sequence, 240 residues long: Transmembrane emp24 domain-containing protein 6 (240 aa).

The signal sequence occupies residues 1-21 (MFPLLFVAGLVVLNLVSSARS). Residues 22 to 200 (QKTEPLSGTG…FFLLQSNYNY (179 aa)) lie on the Lumenal side of the membrane. The 86-residue stretch at 53-138 (TECFWQFAHQ…SVQVYLNFGV (86 aa)) folds into the GOLD domain. N-linked (GlcNAc...) asparagine glycosylation is found at Asn-107 and Asn-156. Residues 201 to 223 (VNWWSTAQSLVIVLSGILQLYFL) form a helical membrane-spanning segment. The Cytoplasmic portion of the chain corresponds to 224–240 (KRLFNTPMTTETQKPRC).

This sequence belongs to the EMP24/GP25L family.

It is found in the endoplasmic reticulum membrane. The sequence is that of Transmembrane emp24 domain-containing protein 6 (TMED6) from Bos taurus (Bovine).